The following is a 661-amino-acid chain: NUAK family SNF1-like kinase 1 (661 aa).

Met1 carries the N-acetylmethionine modification. Residues 1 to 24 (MEGAAAPVAGDRPDLGLGAPGSPR) form a disordered region. Ser22 is subject to Phosphoserine. The 252-residue stretch at 55–306 (YELQETLGKG…IEDIANHWWV (252 aa)) folds into the Protein kinase domain. ATP is bound by residues 61–69 (LGKGTYGKV) and Lys84. Catalysis depends on Asp178, which acts as the Proton acceptor. Residue Thr211 is modified to Phosphothreonine; by LKB1. Disordered stretches follow at residues 345–421 (TEAK…EGVV) and 442–570 (LPSS…RPSS). A compositionally biased stretch (basic residues) spans 393 to 404 (SSKRPKGILKKR). The GILK motif signature appears at 399 to 402 (GILK). Residue Ser455 is modified to Phosphoserine. Residues 518-529 (SCRRKGILKHSS) are compositionally biased toward basic residues. Ser600 bears the Phosphoserine; by PKB/AKT1 mark.

This sequence belongs to the protein kinase superfamily. CAMK Ser/Thr protein kinase family. SNF1 subfamily. In terms of assembly, interacts (via GILK motif) with PPP1CB; the interaction is direct and bridges NUAK1 and PPP1R12A. Interacts with CDKN1A. It depends on Mg(2+) as a cofactor. Post-translationally, ubiquitinated with 'Lys-29'- and 'Lys-33'-linked polyubiquitins which appear to impede LKB1-mediated phosphorylation. Deubiquitinated by USP9X. Phosphorylated at Thr-211 by STK11/LKB1 in complex with STE20-related adapter-alpha (STRADA) pseudo kinase and CAB39. Not dephosphorylated by the myosin PP1 complex when regulating its activity, due to the presence of PPP1R12A, which prevents myosin PP1 from dephosphorylating NUAK1. Phosphorylated by STK38L upon stimulation with IGF1. In terms of tissue distribution, expressed at high levels in heart and brain, and at lower levels in skeletal muscle, kidney, ovary, placenta, lung and liver. Highly up-regulated in colorectal cancer cell lines.

It is found in the nucleus. The protein localises to the cytoplasm. The catalysed reaction is L-seryl-[protein] + ATP = O-phospho-L-seryl-[protein] + ADP + H(+). It carries out the reaction L-threonyl-[protein] + ATP = O-phospho-L-threonyl-[protein] + ADP + H(+). Its activity is regulated as follows. Activated by phosphorylation on Thr-211. Activated by phosphorylation at Ser-600 AKT1 during glucose starvation; the relevance of such activation in normal cells is however unsure. Serine/threonine-protein kinase involved in various processes such as cell adhesion, regulation of cell ploidy and senescence, cell proliferation and tumor progression. Phosphorylates ATM, CASP6, LATS1, PPP1R12A and p53/TP53. Acts as a regulator of cellular senescence and cellular ploidy by mediating phosphorylation of 'Ser-464' of LATS1, thereby controlling its stability. Controls cell adhesion by regulating activity of the myosin protein phosphatase 1 (PP1) complex. Acts by mediating phosphorylation of PPP1R12A subunit of myosin PP1: phosphorylated PPP1R12A then interacts with 14-3-3, leading to reduced dephosphorylation of myosin MLC2 by myosin PP1. May be involved in DNA damage response: phosphorylates p53/TP53 at 'Ser-15' and 'Ser-392' and is recruited to the CDKN1A/WAF1 promoter to participate in transcription activation by p53/TP53. May also act as a tumor malignancy-associated factor by promoting tumor invasion and metastasis under regulation and phosphorylation by AKT1. Suppresses Fas-induced apoptosis by mediating phosphorylation of CASP6, thereby suppressing the activation of the caspase and the subsequent cleavage of CFLAR. Regulates UV radiation-induced DNA damage response mediated by CDKN1A. In association with STK11, phosphorylates CDKN1A in response to UV radiation and contributes to its degradation which is necessary for optimal DNA repair. The chain is NUAK family SNF1-like kinase 1 (NUAK1) from Homo sapiens (Human).